We begin with the raw amino-acid sequence, 368 residues long: 4-hydroxy-3-methylbut-2-en-1-yl diphosphate synthase (flavodoxin) (368 aa).

[4Fe-4S] cluster is bound by residues Cys268, Cys271, Cys303, and Glu310.

The protein belongs to the IspG family. [4Fe-4S] cluster is required as a cofactor.

The enzyme catalyses (2E)-4-hydroxy-3-methylbut-2-enyl diphosphate + oxidized [flavodoxin] + H2O + 2 H(+) = 2-C-methyl-D-erythritol 2,4-cyclic diphosphate + reduced [flavodoxin]. Its pathway is isoprenoid biosynthesis; isopentenyl diphosphate biosynthesis via DXP pathway; isopentenyl diphosphate from 1-deoxy-D-xylulose 5-phosphate: step 5/6. Converts 2C-methyl-D-erythritol 2,4-cyclodiphosphate (ME-2,4cPP) into 1-hydroxy-2-methyl-2-(E)-butenyl 4-diphosphate. The protein is 4-hydroxy-3-methylbut-2-en-1-yl diphosphate synthase (flavodoxin) of Listeria monocytogenes serotype 4b (strain F2365).